The following is a 313-amino-acid chain: Proline iminopeptidase (313 aa).

The 264-residue stretch at 35 to 298 folds into the AB hydrolase-1 domain; sequence KPVVILHGGP…TPGAGHSAFE (264 aa). The active-site Nucleophile is the serine 110. Residue aspartate 266 is part of the active site. The active-site Proton donor is histidine 294.

This sequence belongs to the peptidase S33 family.

It is found in the cytoplasm. It catalyses the reaction Release of N-terminal proline from a peptide.. In terms of biological role, specifically catalyzes the removal of N-terminal proline residues from peptides. The chain is Proline iminopeptidase (pip) from Xylella fastidiosa (strain 9a5c).